The sequence spans 208 residues: Large ribosomal subunit protein uL3 (208 aa).

An N5-methylglutamine modification is found at glutamine 150.

Belongs to the universal ribosomal protein uL3 family. As to quaternary structure, part of the 50S ribosomal subunit. Forms a cluster with proteins L14 and L19. In terms of processing, methylated by PrmB.

One of the primary rRNA binding proteins, it binds directly near the 3'-end of the 23S rRNA, where it nucleates assembly of the 50S subunit. The sequence is that of Large ribosomal subunit protein uL3 from Buchnera aphidicola subsp. Cinara cedri (strain Cc).